A 471-amino-acid polypeptide reads, in one-letter code: Collagenase 3 (471 aa).

The N-terminal stretch at 1 to 19 (MQPGVLAACLLLSWTHCWS) is a signal peptide. A propeptide spans 20 to 103 (LPLLNSNEDD…PRCGVPDVGE (84 aa)) (activation peptide). Residues 94–101 (PRCGVPDV) carry the Cysteine switch motif. Cys96 serves as a coordination point for Zn(2+). Residue Asn117 is glycosylated (N-linked (GlcNAc...) asparagine). Asp128 contributes to the Ca(2+) binding site. N-linked (GlcNAc...) asparagine glycosylation is found at Asn152 and Asn158. Residue Asp162 coordinates Ca(2+). The Zn(2+) site is built by His172 and Asp174. The tract at residues 176–246 (YPFDGPSGLL…GALMFPIYTY (71 aa)) is interaction with TIMP2. Residues Asp179, Gly180, Ser182, and Leu184 each coordinate Ca(2+). His187 provides a ligand contact to Zn(2+). Ca(2+)-binding residues include Asn194, Gly196, and Asp198. His200 contacts Zn(2+). 3 residues coordinate Ca(2+): Asp202, Asp203, and Glu205. His222 is a Zn(2+) binding site. Glu223 is a catalytic residue. Zn(2+) contacts are provided by His226, His232, and Met240. Residues 263-284 (QSLYGPGDEDPNPKHPKTPDKC) form a disordered region. The interaction with collagen stretch occupies residues 268–471 (PGDEDPNPKH…VMPTNSLLWC (204 aa)). Residues 273-284 (PNPKHPKTPDKC) are compositionally biased toward basic and acidic residues. Hemopexin repeat units lie at residues 281-330 (PDKC…WPEL), 331-377 (PNRI…GFPR), 379-427 (VKKI…FPGI), and 428-471 (GGKV…LLWC). Residues Cys284 and Cys471 are joined by a disulfide bond. Positions 291, 293, 335, and 337 each coordinate Ca(2+). Tyr366 is modified (phosphotyrosine; by PKDCC). Residues Ser383 and Ala385 each contribute to the Ca(2+) site. An N-linked (GlcNAc...) asparagine glycan is attached at Asn409. Positions 432 and 434 each coordinate Ca(2+).

The protein belongs to the peptidase M10A family. Ca(2+) is required as a cofactor. Zn(2+) serves as cofactor. Post-translationally, the proenzyme is activated by removal of the propeptide; this cleavage can be effected by other matrix metalloproteinases, such as MMP2, MMP3 and MMP14 and may involve several cleavage steps. Cleavage can also be autocatalytic, after partial maturation by another protease or after treatment with 4-aminophenylmercuric acetate (APMA) (in vitro). N-glycosylated. In terms of processing, tyrosine phosphorylated by PKDCC/VLK.

The protein resides in the secreted. The protein localises to the extracellular space. Its subcellular location is the extracellular matrix. Plays a role in the degradation of extracellular matrix proteins including fibrillar collagen, fibronectin, TNC and ACAN. Cleaves triple helical collagens, including type I, type II and type III collagen, but has the highest activity with soluble type II collagen. Can also degrade collagen type IV, type XIV and type X. May also function by activating or degrading key regulatory proteins, such as TGFB1 and CCN2. Plays a role in wound healing, tissue remodeling, cartilage degradation, bone development, bone mineralization and ossification. Required for normal embryonic bone development and ossification. Plays a role in the healing of bone fractures via endochondral ossification. Plays a role in wound healing, probably by a mechanism that involves proteolytic activation of TGFB1 and degradation of CCN2. Plays a role in keratinocyte migration during wound healing. May play a role in cell migration and in tumor cell invasion. The protein is Collagenase 3 (MMP13) of Oryctolagus cuniculus (Rabbit).